Reading from the N-terminus, the 344-residue chain is Nicotinate-nucleotide--dimethylbenzimidazole phosphoribosyltransferase (344 aa).

E310 serves as the catalytic Proton acceptor.

Belongs to the CobT family.

The catalysed reaction is 5,6-dimethylbenzimidazole + nicotinate beta-D-ribonucleotide = alpha-ribazole 5'-phosphate + nicotinate + H(+). It participates in nucleoside biosynthesis; alpha-ribazole biosynthesis; alpha-ribazole from 5,6-dimethylbenzimidazole: step 1/2. Functionally, catalyzes the synthesis of alpha-ribazole-5'-phosphate from nicotinate mononucleotide (NAMN) and 5,6-dimethylbenzimidazole (DMB). The protein is Nicotinate-nucleotide--dimethylbenzimidazole phosphoribosyltransferase of Shewanella amazonensis (strain ATCC BAA-1098 / SB2B).